Reading from the N-terminus, the 166-residue chain is Minor capsid protein VP2 (166 aa).

Residues 138–166 (PAPSGFVNPNYQPSPPRLKLGPRPPSTNV) are disordered. The segment covering 149-166 (QPSPPRLKLGPRPPSTNV) has biased composition (pro residues).

This sequence belongs to the vesivirus VP2 protein family. In terms of assembly, homooligomer. The portal-like structure consists in 12 copies of VP2. Interacts with capsid protein VP1.

It is found in the virion. It localises to the host cytoplasm. Its function is as follows. Minor structural protein that forms a portal-like structure at a unique three-fold axis of symmetry, following binding to the host receptor. The channel formed by VP2 may allow the delivery of the viral genome through the host endosomal membrane. The polypeptide is Minor capsid protein VP2 (Homo sapiens (Human)).